The following is a 344-amino-acid chain: MQQITLTQPDDWHLHFRDNDMLLETVPATARTFKRAIVMPNLVPPVVNAELASAYRDRILAARPQGSEFEPLMTLFLTNTTSIDDIRAAKKAGVVAAKLYPAGATTNSDAAVKGIEALFPVFAEMAEQGMLLLIHGEVTESHVDIFDREKLFIEQFLVKIVNQFPQLKVVLEHITTSDAVDFVSASSHNVAATITPQHLLLNRNDLLVGGVRPHNFCLPVLKRSTHQQALRKAVATGSSKFFLGTDSAPHEKSAKESACGCAGCYSAWSALELYAQVFEELDALDKLEGFASHHGADFYGLPRNTKQVTLVKEEWTIPEVITLPNGEPIVPFFAGQTVNWALKA.

The Zn(2+) site is built by histidine 13 and histidine 15. Residues 15 to 17 (HFR) and asparagine 41 each bind substrate. Lysine 98, histidine 135, and histidine 173 together coordinate Zn(2+). Position 98 is an N6-carboxylysine (lysine 98). Substrate is bound at residue histidine 135. Leucine 218 serves as a coordination point for substrate. Residue aspartate 246 participates in Zn(2+) binding. The active site involves aspartate 246. Residues histidine 250 and alanine 262 each coordinate substrate.

This sequence belongs to the metallo-dependent hydrolases superfamily. DHOase family. Class II DHOase subfamily. As to quaternary structure, homodimer. Requires Zn(2+) as cofactor.

It carries out the reaction (S)-dihydroorotate + H2O = N-carbamoyl-L-aspartate + H(+). It participates in pyrimidine metabolism; UMP biosynthesis via de novo pathway; (S)-dihydroorotate from bicarbonate: step 3/3. Functionally, catalyzes the reversible cyclization of carbamoyl aspartate to dihydroorotate. In Pseudoalteromonas atlantica (strain T6c / ATCC BAA-1087), this protein is Dihydroorotase.